Here is a 196-residue protein sequence, read N- to C-terminus: Recombination protein RecR (196 aa).

The segment at 55 to 70 (CELCGNLESESPCSIC) adopts a C4-type zinc-finger fold. A Toprim domain is found at 78-173 (DIVCVVEEIT…KLSFLAHGIP (96 aa)).

The protein belongs to the RecR family.

In terms of biological role, may play a role in DNA repair. It seems to be involved in an RecBC-independent recombinational process of DNA repair. It may act with RecF and RecO. This Neorickettsia sennetsu (strain ATCC VR-367 / Miyayama) (Ehrlichia sennetsu) protein is Recombination protein RecR.